The primary structure comprises 190 residues: Movement protein (190 aa).

This sequence belongs to the tombusvirus/aureusvirus movement protein p22 family.

It is found in the host membrane. Functionally, transports viral genome to neighboring plant cells directly through plasmosdesmata, without any budding. The movement protein allows efficient cell to cell propagation, by bypassing the host cell wall barrier. The sequence is that of Movement protein from Cucumber necrosis virus (CNV).